The following is a 673-amino-acid chain: Armadillo repeat-containing protein 8 (673 aa).

Position 2 is an N-acetylalanine (alanine 2). 14 ARM repeats span residues 51 to 92 (NKQK…SLAM), 95 to 134 (ENNVKSLLDCHIIPALLQGLLSPDLKFIEACLRCPRTIFT), 138 to 176 (TPEELLYTDATVIPHLMALLSRSRYTQEYICQIFSHCCK), 178 to 217 (PDHQTILFNHGAVQNIAHLLTSLSYKVRMQALKCFSVLAF), 224 to 265 (MTLV…YMCR), 269 to 309 (IRTD…YLIE), 313 to 352 (ELQRIASITDHLIAMLADYFKYPSSVSAITDIKRLDHDLK), 374 to 413 (DIRKKIIETENMMDRIVTGLSESSVKVRLAAVRCLHSLSR), 416 to 455 (QQLRTSFQDHAVWKPLMKVLQNAPDEILVVASSMLCNLLL), 458 to 497 (SPSKEPILESGAVELLCGLTQSENPALRVNGIWALMNTAF), 501 to 540 (QKIKADILRSLSTEQLFRLLSDSDLNVLMKTLGLLRNLLS), 543 to 585 (PHID…NIAD), 588 to 627 (TAKDLIMTNDDILQKIKYYMGHSHVKLQLAAMFCISNLIW), and 634 to 673 (QERQDKLRDMGIVDILHKLSQSPDSNLCDKAKMALQQYLA). Serine 337 is subject to Phosphoserine. Serine 512 is subject to Phosphoserine.

As to quaternary structure, identified in the CTLH complex that contains GID4, RANBP9 and/or RANBP10, MKLN1, MAEA, RMND5A (or alternatively its paralog RMND5B), GID8, ARMC8, WDR26 and YPEL5. Within this complex, MAEA, RMND5A (or alternatively its paralog RMND5B), GID8, WDR26, and RANBP9 and/or RANBP10 form the catalytic core, while GID4, MKLN1, ARMC8 and YPEL5 have ancillary roles.

It is found in the nucleus. It localises to the cytoplasm. Component of the CTLH E3 ubiquitin-protein ligase complex that selectively accepts ubiquitin from UBE2H and mediates ubiquitination and subsequent proteasomal degradation of the transcription factor HBP1. The polypeptide is Armadillo repeat-containing protein 8 (ARMC8) (Pongo abelii (Sumatran orangutan)).